Reading from the N-terminus, the 128-residue chain is Myelin basic protein (128 aa).

Disordered stretches follow at residues 1–24 (AGGAHFFGQEGSRKVPEKGKEPAT) and 82–128 (TDGQ…PARR). 2 stretches are compositionally biased toward basic and acidic residues: residues 11 to 23 (GSRKVPEKGKEPA) and 96 to 107 (KSREAYRGRKDG).

This sequence belongs to the myelin basic protein family. The N-terminus is blocked.

It is found in the myelin membrane. This protein may function to maintain proper structure of myelin. This Carcharhinus obscurus (Dusky shark) protein is Myelin basic protein (MBP).